We begin with the raw amino-acid sequence, 601 residues long: Trehalose synthase/amylase TreS (601 aa).

Residues 1–21 (MNEAEHSVEHPPVQGSHVEGG) form a disordered region. A substrate-binding site is contributed by D98. N140 contacts Ca(2+). Residues H141 and Q206 each contribute to the substrate site. Residue D208 coordinates Ca(2+). A substrate-binding site is contributed by R236. D238 (nucleophile) is an active-site residue. Ca(2+)-binding residues include Y242, L243, and E245. E280 functions as the Proton donor in the catalytic mechanism. Residues H349 and D350 each coordinate substrate.

It belongs to the glycosyl hydrolase 13 family. TreS subfamily. Homohexamer.

It carries out the reaction D-maltose = alpha,alpha-trehalose. The catalysed reaction is Endohydrolysis of (1-&gt;4)-alpha-D-glucosidic linkages in polysaccharides containing three or more (1-&gt;4)-alpha-linked D-glucose units.. The protein operates within glycan biosynthesis; glycogen biosynthesis. It functions in the pathway capsule biogenesis; capsule polysaccharide biosynthesis. Functionally, catalyzes the reversible interconversion of maltose and trehalose by transglucosylation. Also displays amylase activity, catalyzing the endohydrolysis of (1-&gt;4)-alpha-D-glucosidic linkages in glycogen and maltooligosaccharides such as maltoheptaose, to produce maltose which then can be converted to trehalose. TreS plays a key role in the utilization of trehalose for the production of glycogen and alpha-glucan via the TreS-Pep2 branch involved in the biosynthesis of maltose-1-phosphate (M1P). Might also function as a sensor and/or regulator of trehalose levels within the cell. Thus, when trehalose levels in the cell become dangerously low, TreS could expedite the conversion of glycogen to maltose via its amylase activity and then convert the maltose to trehalose; but this enzyme also could expedite or promote the conversion of trehalose to glycogen when cytoplasmic trehalose levels become too high. The protein is Trehalose synthase/amylase TreS of Mycobacterium tuberculosis (strain CDC 1551 / Oshkosh).